We begin with the raw amino-acid sequence, 215 residues long: 23.2 kDa heat shock protein (215 aa).

Residues 1 to 27 form the signal peptide; that stretch reads MASMRTAAAAAMLACIAVVLASTAADG. In terms of domain architecture, sHSP spans 69–189; that stretch reads DVAMLSMARV…GPRVVGIASA (121 aa). The interval 183 to 215 is disordered; sequence VVGIASAGGDDGGKKSIGGAGEGQNQQAKKVEL. The segment covering 205 to 215 has biased composition (polar residues); it reads GQNQQAKKVEL.

The protein belongs to the small heat shock protein (HSP20) family. In terms of assembly, may form oligomeric structures.

Its subcellular location is the endoplasmic reticulum. The protein is 23.2 kDa heat shock protein (HSP23.2) of Oryza sativa subsp. japonica (Rice).